A 160-amino-acid chain; its full sequence is Cytochrome c-type biogenesis protein CcmE (160 aa).

Over 1 to 8 (MNPRRKKR) the chain is Cytoplasmic. A helical; Signal-anchor for type II membrane protein membrane pass occupies residues 9 to 29 (LGVVLAILFGLSATIGLIIYA). Residues 30 to 160 (LNQNMDLFYT…SQEQKQGSDQ (131 aa)) are Periplasmic-facing. Heme contacts are provided by H128 and Y132.

It belongs to the CcmE/CycJ family.

Its subcellular location is the cell inner membrane. Heme chaperone required for the biogenesis of c-type cytochromes. Transiently binds heme delivered by CcmC and transfers the heme to apo-cytochromes in a process facilitated by CcmF and CcmH. The protein is Cytochrome c-type biogenesis protein CcmE of Vibrio cholerae serotype O1 (strain ATCC 39541 / Classical Ogawa 395 / O395).